The chain runs to 434 residues: Glycoprotein U20 (434 aa).

Residues 1 to 15 form the signal peptide; sequence MITVFVACLFQCVSS. A helical membrane pass occupies residues 322-342; it reads LLWIFIVIPIAAGCMFLYILT.

The protein resides in the host endoplasmic reticulum membrane. The protein localises to the host lysosome membrane. Its function is as follows. Plays a role in the down-regulation of the host stress-induced NKG2D ligand UBPL1, which enables immune cells expressing the NKG2D receptor to recognize and annihilate infected cells prior to viral spread. In Human herpesvirus 6B (strain Z29) (HHV-6 variant B), this protein is Glycoprotein U20 (U20).